A 475-amino-acid polypeptide reads, in one-letter code: Membrane-bound lytic murein transglycosylase F (475 aa).

Positions 1–30 are cleaved as a signal peptide; the sequence is MKKLKINYLFIGILTLLLAAALWPSIPWFG. The interval 31–269 is non-LT domain; that stretch reads KTENHIAAIQ…RIEEKYLGHG (239 aa). The segment at 270–475 is LT domain; it reads DDFDYVDTRS…MKLAQDYPAV (206 aa). Glu314 is a catalytic residue.

This sequence in the N-terminal section; belongs to the bacterial solute-binding protein 3 family. It in the C-terminal section; belongs to the transglycosylase Slt family.

The protein localises to the cell outer membrane. The catalysed reaction is Exolytic cleavage of the (1-&gt;4)-beta-glycosidic linkage between N-acetylmuramic acid (MurNAc) and N-acetylglucosamine (GlcNAc) residues in peptidoglycan, from either the reducing or the non-reducing ends of the peptidoglycan chains, with concomitant formation of a 1,6-anhydrobond in the MurNAc residue.. Functionally, murein-degrading enzyme that degrades murein glycan strands and insoluble, high-molecular weight murein sacculi, with the concomitant formation of a 1,6-anhydromuramoyl product. Lytic transglycosylases (LTs) play an integral role in the metabolism of the peptidoglycan (PG) sacculus. Their lytic action creates space within the PG sacculus to allow for its expansion as well as for the insertion of various structures such as secretion systems and flagella. This is Membrane-bound lytic murein transglycosylase F from Salmonella typhi.